A 484-amino-acid polypeptide reads, in one-letter code: Monocarboxylate transporter 2 (484 aa).

Topologically, residues 1–16 (MPSEPSAPLPQPLPPD) are cytoplasmic. Residues 17-37 (GGWGWVVVCASFISIGFSYAF) form a helical membrane-spanning segment. Residues 38–60 (PKAVTVFFKDIQEIFNTTSSQIA) lie on the Extracellular side of the membrane. Residues 61 to 81 (WISSIMLAVMYAGGPISSVLV) traverse the membrane as a helical segment. At 82–90 (NNYGSRPVV) the chain is on the cytoplasmic side. The helical transmembrane segment at 91 to 111 (IVGGLLCCIGMILASYSNSVI) threads the bilayer. The Extracellular portion of the chain corresponds to 112–116 (ELYLT). Residues 117 to 137 (VGFIGGLGLAFNLQPALTIIG) traverse the membrane as a helical segment. Residues 138–149 (KYFYRRRPLANG) are Cytoplasmic-facing. A helical membrane pass occupies residues 150–170 (CAMAGSPVFLSTLAPFNQYLF). Over 171-174 (NNYG) the chain is Extracellular. Residues 175–195 (WKGSFLILGGIFLHSCVAGCL) traverse the membrane as a helical segment. Over 196 to 245 (MRPVGPSPNTKKSKSKVGSRHDSTLKKASKVSTAQKVNRFLDFSLFMHRG) the chain is Cytoplasmic. The chain crosses the membrane as a helical span at residues 246 to 266 (FLIYLSGNVILFLGIFAPIIF). Over 267 to 281 (LAQYAKHIGVDDYNS) the chain is Extracellular. A helical membrane pass occupies residues 282 to 302 (AFLLSVMAFIDMFARPSVGLI). Topologically, residues 303 to 311 (ANTSLIRPR) are cytoplasmic. The helical transmembrane segment at 312 to 332 (IQYLFSSAIIFTGICHLLCPL) threads the bilayer. Residues 333–337 (ATTYS) lie on the Extracellular side of the membrane. The chain crosses the membrane as a helical span at residues 338-358 (ALVVYVVFFGLGFGSISSLLF). The Cytoplasmic portion of the chain corresponds to 359–372 (ECLMDIVGATRFSS). Residues 373–393 (AVGLTTIVECCPVLFGPPLAG) form a helical membrane-spanning segment. Residues 394–405 (KLLDITGEYKYL) are Extracellular-facing. The chain crosses the membrane as a helical span at residues 406–426 (YIASGTVVLVSGTYLLIGNAI). Residues 427 to 484 (NYRLLDKERKREKAKKKKSASHASREMEALNRSKQDEVTVKASNAHNPPSDRDKESNI) are Cytoplasmic-facing. The tract at residues 438–484 (EKAKKKKSASHASREMEALNRSKQDEVTVKASNAHNPPSDRDKESNI) is disordered. 2 stretches are compositionally biased toward basic and acidic residues: residues 449-465 (ASRE…DEVT) and 475-484 (PSDRDKESNI).

This sequence belongs to the major facilitator superfamily. Monocarboxylate porter (TC 2.A.1.13) family. Homodimer. Interacts with GRID2IP. Interacts with EMB; interaction mediates SLC16A7 targeting to the plasma membrane. Interacts with isoform 2 of BSG. As to expression, detected in testis and in spermatozoa (at protein level).

The protein localises to the cell membrane. The protein resides in the cytoplasm. It localises to the basolateral cell membrane. The enzyme catalyses (S)-lactate(in) + H(+)(in) = (S)-lactate(out) + H(+)(out). It carries out the reaction 3-methyl-2-oxobutanoate(out) + H(+)(out) = 3-methyl-2-oxobutanoate(in) + H(+)(in). It catalyses the reaction acetoacetate(out) + H(+)(out) = acetoacetate(in) + H(+)(in). The catalysed reaction is (R)-3-hydroxybutanoate(out) + H(+)(out) = (R)-3-hydroxybutanoate(in) + H(+)(in). The enzyme catalyses 4-methyl-2-oxopentanoate(out) + H(+)(out) = 4-methyl-2-oxopentanoate(in) + H(+)(in). It carries out the reaction pyruvate(out) + H(+)(out) = pyruvate(in) + H(+)(in). It catalyses the reaction (S)-3-hydroxybutanoate(out) + H(+)(out) = (S)-3-hydroxybutanoate(in) + H(+)(in). Transport activity exhibits steep dependence on substrate concentration. Substrate concentration sensitivity of SLC16A7 arises from the strong inter-subunit cooperativity of the SLC16A7 dimer during transport. Inhibited by AR-C155858. In terms of biological role, proton-coupled monocarboxylate symporter. Catalyzes the rapid transport across the plasma membrane of monocarboxylates such as L-lactate, pyruvate and ketone bodies, acetoacetate, beta-hydroxybutyrate and acetate. Dimerization is functionally required and both subunits work cooperatively in transporting substrate. This Mus musculus (Mouse) protein is Monocarboxylate transporter 2 (Slc16a7).